Here is a 476-residue protein sequence, read N- to C-terminus: Raffinose invertase (476 aa).

Residues 35–38 (WMND), Gln54, 97–98 (FS), 159–160 (RD), Glu214, and Trp297 each bind substrate. Asp38 is a catalytic residue.

Belongs to the glycosyl hydrolase 32 family. In terms of assembly, homodimer.

It carries out the reaction Hydrolysis of terminal non-reducing beta-D-fructofuranoside residues in beta-D-fructofuranosides.. Its function is as follows. May prevent the potential hasard of excessive sucrose accumulation. This is Raffinose invertase (rafD) from Escherichia coli.